Reading from the N-terminus, the 662-residue chain is MSAFDGVENQMNGPDSSPRLSQDPREPRSLLSSSCFPITLKFVDVCYRVKIHGMSNDSCNIKKLLGLKQKPSDETRSTEERTILSGVTGMISPGEFMAVLGPSGSGKSTLLNAVAGRLHGSNLTGKILINDGKITKQTLKRTGFVAQDDLLYPHLTVRETLVFVALLRLPRSLTRDVKLRAAESVISELGLTKCENTVVGNTFIRGISGGERKRVSIAHELLINPSLLVLDEPTSGLDATAALRLVQTLAGLAHGKGKTVVTSIHQPSSRVFQMFDTVLLLSEGKCLFVGKGRDAMAYFESVGFSPAFPMNPADFLLDLANGVCQTDGVTEREKPNVRQTLVTAYDTLLAPQVKTCIEVSHFPQDNARFVKTRVNGGGITTCIATWFSQLCILLHRLLKERRHESFDLLRIFQVVAASILCGLMWWHSDYRDVHDRLGLLFFISIFWGVLPSFNAVFTFPQERAIFTRERASGMYTLSSYFMAHVLGSLSMELVLPASFLTFTYWMVYLRPGIVPFLLTLSVLLLYVLASQGLGLALGAAIMDAKKASTIVTVTMLAFVLTGGYYVNKVPSGMVWMKYVSTTFYCYRLLVAIQYGSGEEILRMLGCDSKGKQGASAATSAGCRFVEEEVIGDVGMWTSVGVLFLMFFGYRVLAYLALRRIKH.

Residues 1-30 (MSAFDGVENQMNGPDSSPRLSQDPREPRSL) form a disordered region. The segment covering 9–20 (NQMNGPDSSPRL) has biased composition (polar residues). A glycan (N-linked (GlcNAc...) asparagine) is linked at N56. One can recognise an ABC transporter domain in the interval 69-308 (QKPSDETRST…FESVGFSPAF (240 aa)). 101–108 (GPSGSGKS) is a binding site for ATP. Residue N122 is glycosylated (N-linked (GlcNAc...) asparagine). 7 consecutive transmembrane segments (helical) span residues 374-394 (VNGG…CILL), 406-426 (FDLL…LMWW), 437-457 (LGLL…NAVF), 489-509 (LSME…MVYL), 522-542 (VLLL…AAIM), 547-567 (ASTI…YYVN), and 629-649 (VIGD…FFGY). The 207-residue stretch at 388–594 (SQLCILLHRL…CYRLLVAIQY (207 aa)) folds into the ABC transmembrane type-2 domain.

The protein belongs to the ABC transporter superfamily. ABCG family. Eye pigment precursor importer (TC 3.A.1.204) subfamily. Mainly expressed in vascular tissues,predominantly in phloem companion cells, with highest levels in roots and seeds, and lower levels in seedlings, stems, leaves and flowers. Mostly observed in inflorescence meristems relative to cauline leaves and developing siliques. In seeds, mainly expressed in the endosperm and, to a lesser extent, in the embryo.

The protein localises to the cell membrane. It carries out the reaction abscisate(in) + ATP + H2O = abscisate(out) + ADP + phosphate + H(+). ADP and vanadate (ABC transporters inhibitor) inhibit the ATP-dependent abscisic acid (ABA) uptake. Its function is as follows. High affinity abscisic acid (ABA) transporter that mediates the export of ABA, with a preference for (+)-ABA, through the plasma membrane, especially in vascular tissues (e.g. phloem companion cells), and is involved in the intercellular ABA signaling pathway. Together with ABCG31, export ABA from the endosperm to deliver it to the embryo via ABCG30 and ABCG40-mediated import to suppress radicle extension and subsequent embryonic growth. The polypeptide is ABC transporter G family member 25 (Arabidopsis thaliana (Mouse-ear cress)).